Reading from the N-terminus, the 339-residue chain is MGNTVSCCVSPSGSPKLPRQVERLEDYQNNTDISDDTGPYLQHISDREVPDDLALESNPSDHARASTIFLSKSQTDVRDRRKSNHINHVSPGLLSKKYSSCSTIFIDDSTVSQPNLKSTIKCVTLAIYYHIKNRDSDRSLDIFDEKMHPLSREQVPDDYSRTDPEHKLIYRFVRTLFSAAQLTAECAIVTLVYLERLLTYAELDICPSNWKRIVLGAILLASKVWDDQAVWNVDYCQILKDITVEDMNEMERHFLELLQFNINVPASVYAKYYFDLRSLADDNNLSFPLEPLSNERAQKLEAISRLCEDKYKDLSRVAMRRSFSADNLVGIRRSNAVLS.

Residues 181 to 263 form the Cyclin N-terminal domain; sequence QLTAECAIVT…FLELLQFNIN (83 aa).

This sequence belongs to the cyclin family. Cyclin Y subfamily.

The protein localises to the cell membrane. Its function is as follows. Key regulator of Wnt signaling implicated in various biological processes such as embryonic neurogenesis. The sequence is that of Cyclin-Y-like protein 1 (ccnyl1) from Danio rerio (Zebrafish).